Consider the following 145-residue polypeptide: Cell wall synthesis protein CwsA (145 aa).

A helical transmembrane segment spans residues 104 to 124 (WIFAGIAAAILAGGAVAFSIV).

It belongs to the CwsA family. Interacts with CrgA and Wag31.

It localises to the cell membrane. Its function is as follows. Required for regulated cell division, cell wall synthesis and the maintenance of cell shape. This is Cell wall synthesis protein CwsA from Mycobacterium tuberculosis (strain ATCC 25618 / H37Rv).